A 458-amino-acid polypeptide reads, in one-letter code: NALCN channel auxiliary factor 1 (458 aa).

Residues 40 to 60 (LSLASLLFFTVLLSDHLWFCA) traverse the membrane as a helical segment. The interval 70 to 155 (KEHQQQQRQQ…NRGKDDRGKA (86 aa)) is disordered. Positions 75 to 96 (QQRQQQQQQQQQRQRQQQQQQR) are enriched in low complexity. Positions 136 to 145 (GDGGGGGGKG) are enriched in gly residues. Cystine bridges form between Cys191/Cys261, Cys226/Cys313, Cys246/Cys261, Cys304/Cys341, Cys324/Cys377, Cys330/Cys376, and Cys334/Cys361. The N-linked (GlcNAc...) asparagine glycan is linked to Asn217. Residues 417–437 (LKLCVLVLILLHTVLTASAAQ) traverse the membrane as a helical segment.

This sequence belongs to the NALF family. Component of the NALCN channel complex. NALCN complex consists of NALCN and auxiliary subunits, UNC79, UNC80 and NACL1. These auxiliary subunits are essential for the NALCN channel function.

It is found in the cell membrane. Auxillary component of the NALCN sodium channel complex, a channel that regulates the resting membrane potential and controls neuronal excitability. The protein is NALCN channel auxiliary factor 1 of Homo sapiens (Human).